Reading from the N-terminus, the 79-residue chain is Acyl carrier protein (79 aa).

In terms of domain architecture, Carrier spans methionine 1–asparagine 76. Residue serine 36 is modified to O-(pantetheine 4'-phosphoryl)serine.

Belongs to the acyl carrier protein (ACP) family. In terms of processing, 4'-phosphopantetheine is transferred from CoA to a specific serine of apo-ACP by AcpS. This modification is essential for activity because fatty acids are bound in thioester linkage to the sulfhydryl of the prosthetic group.

It localises to the cytoplasm. The protein operates within lipid metabolism; fatty acid biosynthesis. In terms of biological role, carrier of the growing fatty acid chain in fatty acid biosynthesis. The protein is Acyl carrier protein of Campylobacter hominis (strain ATCC BAA-381 / DSM 21671 / CCUG 45161 / LMG 19568 / NCTC 13146 / CH001A).